A 534-amino-acid polypeptide reads, in one-letter code: Serine/threonine-protein kinase ppk15 (534 aa).

A disordered region spans residues Met-1–Phe-40. Ser-33, Ser-56, and Ser-60 each carry phosphoserine. The segment at Phe-85 to Asn-104 is disordered. Residues Tyr-130 to Ile-458 enclose the Protein kinase domain. ATP-binding positions include Leu-136–Val-144 and Lys-159. Catalysis depends on Asp-257, which acts as the Proton acceptor. Phosphotyrosine is present on Tyr-291.

It belongs to the protein kinase superfamily. Ser/Thr protein kinase family.

It is found in the cytoplasm. The protein localises to the cytoskeleton. Its subcellular location is the microtubule organizing center. It localises to the spindle pole body. The enzyme catalyses L-seryl-[protein] + ATP = O-phospho-L-seryl-[protein] + ADP + H(+). It carries out the reaction L-threonyl-[protein] + ATP = O-phospho-L-threonyl-[protein] + ADP + H(+). This is Serine/threonine-protein kinase ppk15 (ppk15) from Schizosaccharomyces pombe (strain 972 / ATCC 24843) (Fission yeast).